The chain runs to 248 residues: MRQIIIAGNWKMNASKEATNTLVIGILSGMADVKSKVIVCVPSLYMSQVEVLVVDSQLNLGAQNLNVNKLGAFTGEISADMIKDFGAKYVIVGHSERRSLYGETDEIVAQKVQVALDNNLTPLFCIGELLEDRESNNTKSVVSKQIQVVIDRVGIEAFKNIIVAYEPVWAIGTNVTATPQQAQDTHAFIRSMLAEYDADIAQITSILYGGSMNSRNAAELLNCKDIDGGLIGGASLKAQDFLQICKAG.

9-11 (NWK) contributes to the substrate binding site. Histidine 94 serves as the catalytic Electrophile. Glutamate 166 (proton acceptor) is an active-site residue. Residues glycine 172, serine 211, and 232 to 233 (GG) contribute to the substrate site.

This sequence belongs to the triosephosphate isomerase family. In terms of assembly, homodimer.

It localises to the cytoplasm. It carries out the reaction D-glyceraldehyde 3-phosphate = dihydroxyacetone phosphate. It functions in the pathway carbohydrate biosynthesis; gluconeogenesis. It participates in carbohydrate degradation; glycolysis; D-glyceraldehyde 3-phosphate from glycerone phosphate: step 1/1. Functionally, involved in the gluconeogenesis. Catalyzes stereospecifically the conversion of dihydroxyacetone phosphate (DHAP) to D-glyceraldehyde-3-phosphate (G3P). The chain is Triosephosphate isomerase from Ruthia magnifica subsp. Calyptogena magnifica.